A 1055-amino-acid chain; its full sequence is Auxin response factor 16 (1055 aa).

The TF-B3 DNA-binding region spans 127-229 (FCKTLTASDT…QLLLGIRRAT (103 aa)). Disordered regions lie at residues 485–510 (PVMSQHQQQPHQLSQQQQVQPSQQSS), 532–565 (QEHLQRQQSQPAQQLKAASSLHSVEQHKLKEQTS), 585–609 (SQLQQLGLPKSPTHRQGLTGLPIAG), 701–720 (SDSIGQLKQSPSQQAPLNHM), and 732–769 (SHSALAESGDPSSSTAPSTSRISPINSLSRANQGSRNL). 2 stretches are compositionally biased toward low complexity: residues 488-510 (SQHQQQPHQLSQQQQVQPSQQSS) and 532-552 (QEHLQRQQSQPAQQLKAASSL). The segment covering 742-756 (PSSSTAPSTSRISPI) has biased composition (low complexity). Residues 757–769 (NSLSRANQGSRNL) are compositionally biased toward polar residues. A PB1 domain is found at 940–1024 (RTFTKVQKRG…KSIKILSAAE (85 aa)). Residues 1034 to 1055 (LGGVPPQTQACSASDDANAWRG) form a disordered region.

The protein belongs to the ARF family. Homodimers and heterodimers. Expressed in roots, culms, leaves and young panicles.

The protein localises to the nucleus. Functionally, auxin response factors (ARFs) are transcriptional factors that bind specifically to the DNA sequence 5'-TGTCTC-3' found in the auxin-responsive promoter elements (AuxREs). The protein is Auxin response factor 16 (ARF16) of Oryza sativa subsp. japonica (Rice).